Reading from the N-terminus, the 110-residue chain is NADH-quinone oxidoreductase subunit K (110 aa).

The next 3 membrane-spanning stretches (helical) occupy residues 7 to 27 (LGSY…GVFV), 31 to 51 (IIAI…NFIA), and 73 to 93 (IFVI…VIAI).

Belongs to the complex I subunit 4L family. NDH-1 is composed of 14 different subunits. Subunits NuoA, H, J, K, L, M, N constitute the membrane sector of the complex.

It localises to the cell membrane. It catalyses the reaction a quinone + NADH + 5 H(+)(in) = a quinol + NAD(+) + 4 H(+)(out). In terms of biological role, NDH-1 shuttles electrons from NADH, via FMN and iron-sulfur (Fe-S) centers, to quinones in the respiratory chain. The immediate electron acceptor for the enzyme in this species is believed to be a menaquinone. Couples the redox reaction to proton translocation (for every two electrons transferred, four hydrogen ions are translocated across the cytoplasmic membrane), and thus conserves the redox energy in a proton gradient. The chain is NADH-quinone oxidoreductase subunit K from Desulfitobacterium hafniense (strain DSM 10664 / DCB-2).